The chain runs to 397 residues: Succinate--CoA ligase [ADP-forming] subunit beta (397 aa).

One can recognise an ATP-grasp domain in the interval 9 to 254 (KALLKSFGAP…KSEEDEKEIQ (246 aa)). ATP is bound by residues Lys-46, 53 to 55 (GRG), Glu-109, Ala-112, and Glu-117. Residues Asn-209 and Asp-223 each coordinate Mg(2+). Residues Asn-274 and 331-333 (GIM) contribute to the substrate site.

The protein belongs to the succinate/malate CoA ligase beta subunit family. In terms of assembly, heterotetramer of two alpha and two beta subunits. The cofactor is Mg(2+).

It carries out the reaction succinate + ATP + CoA = succinyl-CoA + ADP + phosphate. It catalyses the reaction GTP + succinate + CoA = succinyl-CoA + GDP + phosphate. It functions in the pathway carbohydrate metabolism; tricarboxylic acid cycle; succinate from succinyl-CoA (ligase route): step 1/1. Functionally, succinyl-CoA synthetase functions in the citric acid cycle (TCA), coupling the hydrolysis of succinyl-CoA to the synthesis of either ATP or GTP and thus represents the only step of substrate-level phosphorylation in the TCA. The beta subunit provides nucleotide specificity of the enzyme and binds the substrate succinate, while the binding sites for coenzyme A and phosphate are found in the alpha subunit. This Rhizobium rhizogenes (strain K84 / ATCC BAA-868) (Agrobacterium radiobacter) protein is Succinate--CoA ligase [ADP-forming] subunit beta.